The following is a 156-amino-acid chain: uncharacterized protein (156 aa).

The N-acetyltransferase domain occupies 1-145 (MIIRKFSSKD…DAILMIKKKP (145 aa)).

Belongs to the acetyltransferase family.

The protein resides in the cytoplasm. This is an uncharacterized protein from Methanocaldococcus jannaschii (strain ATCC 43067 / DSM 2661 / JAL-1 / JCM 10045 / NBRC 100440) (Methanococcus jannaschii).